The primary structure comprises 360 residues: Protein phosphatase 1 regulatory subunit 7 (360 aa).

Positions M1–H63 are disordered. An N-acetylalanine modification is found at A2. A phosphoserine mark is found at S12, S24, S27, S44, and S47. Residues E17–K34 show a composition bias toward basic and acidic residues. LRR repeat units follow at residues D77–K98, K99–Q120, S121–T142, E143–T164, Q165–Q186, Q187–T208, N209–S230, N231–V252, N253–N274, K275–T296, and E297–K318. S322 carries the phosphoserine modification. One can recognise an LRRCT domain in the interval N331 to F360.

It belongs to the SDS22 family. In terms of assembly, interacts with PPP1CA, PPP1CB and PPP1CC/PPP1G.

The protein localises to the nucleus. Its function is as follows. Regulatory subunit of protein phosphatase 1. This Rattus norvegicus (Rat) protein is Protein phosphatase 1 regulatory subunit 7 (Ppp1r7).